A 457-amino-acid chain; its full sequence is Argininosuccinate lyase (457 aa).

It belongs to the lyase 1 family. Argininosuccinate lyase subfamily.

Its subcellular location is the cytoplasm. The enzyme catalyses 2-(N(omega)-L-arginino)succinate = fumarate + L-arginine. The protein operates within amino-acid biosynthesis; L-arginine biosynthesis; L-arginine from L-ornithine and carbamoyl phosphate: step 3/3. The polypeptide is Argininosuccinate lyase (Shigella dysenteriae serotype 1 (strain Sd197)).